Reading from the N-terminus, the 67-residue chain is Large ribosomal subunit protein uL29 (67 aa).

The protein belongs to the universal ribosomal protein uL29 family.

In Methanothrix thermoacetophila (strain DSM 6194 / JCM 14653 / NBRC 101360 / PT) (Methanosaeta thermophila), this protein is Large ribosomal subunit protein uL29.